A 463-amino-acid chain; its full sequence is Elongation factor 1-alpha 2 (463 aa).

Gly-2 is subject to N,N,N-trimethylglycine. In terms of domain architecture, tr-type G spans 5 to 242 (KTHINIVVIG…DTILPPTRPT (238 aa)). The segment at 14 to 21 (GHVDSGKS) is G1. GTP-binding residues include Asp-17, Ser-18, Gly-19, Lys-20, Ser-21, and Thr-22. Asp-17 is a Mg(2+) binding site. Residue Lys-36 is modified to N6,N6,N6-trimethyllysine; alternate. Lys-36 is modified (N6,N6-dimethyllysine; alternate). Position 36 is an N6-methyllysine; alternate (Lys-36). At Lys-55 the chain carries N6,N6,N6-trimethyllysine. N6,N6-dimethyllysine is present on Lys-55. Residues 70 to 74 (GITID) are G2. Lys-79 is modified (N6,N6,N6-trimethyllysine). A G3 region spans residues 91 to 94 (DAPG). GTP-binding residues include Asn-153, Lys-154, and Asp-156. Residues 153–156 (NKMD) are G4. Ser-163 carries the phosphoserine modification. Residue Lys-165 is modified to N6,N6-dimethyllysine; alternate. Lys-165 carries the post-translational modification N6-methyllysine; alternate. Lys-165 carries the post-translational modification N6,N6,N6-trimethyllysine; alternate; by EEF1AKMT3. Lys-179 carries the post-translational modification N6-acetyllysine. GTP is bound by residues Ser-194, Gly-195, and Trp-196. The interval 194 to 196 (SGW) is G5. Ser-224 is modified (phosphoserine). Position 239 is a phosphothreonine (Thr-239). 5-glutamyl glycerylphosphorylethanolamine is present on residues Glu-301 and Glu-374. Residue Lys-439 is modified to N6-acetyllysine. The interval 444-463 (KSGGAGKVTKSAQKAQKAGK) is disordered.

Belongs to the TRAFAC class translation factor GTPase superfamily. Classic translation factor GTPase family. EF-Tu/EF-1A subfamily. In terms of assembly, homodimer; arranged in a 'head to tail' dimer configuration. Trimethylated at Lys-165 by EEF1AKMT3. Mono-, di-, and trimethylated at Lys-36 by EEF1AKMT4; trimethylated form is predominant. Methylation by EEF1AKMT4 contributes to the fine-tuning of translation rates for a subset of tRNAs. Trimethylated at the N-terminus and dimethylated at Lys-55 by METTL13.

It is found in the endoplasmic reticulum membrane. The enzyme catalyses GTP + H2O = GDP + phosphate + H(+). Translation elongation factor that catalyzes the GTP-dependent binding of aminoacyl-tRNA (aa-tRNA) to the A-site of ribosomes during the elongation phase of protein synthesis. Base pairing between the mRNA codon and the aa-tRNA anticodon promotes GTP hydrolysis, releasing the aa-tRNA from EEF1A1 and allowing its accommodation into the ribosome. The growing protein chain is subsequently transferred from the P-site peptidyl tRNA to the A-site aa-tRNA, extending it by one amino acid through ribosome-catalyzed peptide bond formation. The protein is Elongation factor 1-alpha 2 (EEF1A2) of Bos taurus (Bovine).